Reading from the N-terminus, the 145-residue chain is Fatty acid-binding protein homolog 4 (145 aa).

Belongs to the calycin superfamily. Fatty-acid binding protein (FABP) family.

The chain is Fatty acid-binding protein homolog 4 (lbp-4) from Caenorhabditis elegans.